The primary structure comprises 194 residues: Protein GrpE (194 aa).

A disordered region spans residues 1 to 44 (MAEEKQNEELNEQEELNETEAETAEAEQTAAEADAPAEETQTEM). Acidic residues predominate over residues 9–25 (ELNEQEELNETEAETAE).

Belongs to the GrpE family. As to quaternary structure, homodimer.

The protein resides in the cytoplasm. Participates actively in the response to hyperosmotic and heat shock by preventing the aggregation of stress-denatured proteins, in association with DnaK and GrpE. It is the nucleotide exchange factor for DnaK and may function as a thermosensor. Unfolded proteins bind initially to DnaJ; upon interaction with the DnaJ-bound protein, DnaK hydrolyzes its bound ATP, resulting in the formation of a stable complex. GrpE releases ADP from DnaK; ATP binding to DnaK triggers the release of the substrate protein, thus completing the reaction cycle. Several rounds of ATP-dependent interactions between DnaJ, DnaK and GrpE are required for fully efficient folding. This Bacillus licheniformis (strain ATCC 14580 / DSM 13 / JCM 2505 / CCUG 7422 / NBRC 12200 / NCIMB 9375 / NCTC 10341 / NRRL NRS-1264 / Gibson 46) protein is Protein GrpE.